The following is a 251-amino-acid chain: tRNA (guanine-N(1)-)-methyltransferase (251 aa).

Residues Gly-111 and 131 to 136 each bind S-adenosyl-L-methionine; that span reads LGDFVL.

It belongs to the RNA methyltransferase TrmD family. Homodimer.

Its subcellular location is the cytoplasm. The catalysed reaction is guanosine(37) in tRNA + S-adenosyl-L-methionine = N(1)-methylguanosine(37) in tRNA + S-adenosyl-L-homocysteine + H(+). Specifically methylates guanosine-37 in various tRNAs. This is tRNA (guanine-N(1)-)-methyltransferase from Synechococcus sp. (strain JA-2-3B'a(2-13)) (Cyanobacteria bacterium Yellowstone B-Prime).